Consider the following 118-residue polypeptide: UPF0134 protein MPN_287 (118 aa).

This sequence belongs to the UPF0134 family.

In Mycoplasma pneumoniae (strain ATCC 29342 / M129 / Subtype 1) (Mycoplasmoides pneumoniae), this protein is UPF0134 protein MPN_287.